Consider the following 193-residue polypeptide: Acyl carrier protein phosphodiesterase (193 aa).

It belongs to the AcpH family.

It catalyses the reaction holo-[ACP] + H2O = apo-[ACP] + (R)-4'-phosphopantetheine + H(+). Converts holo-ACP to apo-ACP by hydrolytic cleavage of the phosphopantetheine prosthetic group from ACP. The chain is Acyl carrier protein phosphodiesterase from Yersinia pestis.